Here is a 226-residue protein sequence, read N- to C-terminus: Chalcone--flavanone isomerase 3 (226 aa).

Positions 49, 114, and 191 each coordinate substrate.

Belongs to the chalcone isomerase family.

It carries out the reaction a chalcone = a flavanone.. It functions in the pathway secondary metabolite biosynthesis; flavonoid biosynthesis. Catalyzes the intramolecular cyclization of bicyclic chalcones into tricyclic (S)-flavanones. Responsible for the isomerization of 4,2',4',6'-tetrahydroxychalcone (also termed chalcone) into naringenin. In Glycine max (Soybean), this protein is Chalcone--flavanone isomerase 3 (CHI3).